The following is a 497-amino-acid chain: Taxane 10-beta-hydroxylase (497 aa).

Cysteine 443 lines the heme pocket.

The protein belongs to the cytochrome P450 family. It depends on heme as a cofactor.

It carries out the reaction taxa-4(20),11-dien-5alpha-yl acetate + reduced [NADPH--hemoprotein reductase] + O2 = 10beta-hydroxytaxa-4(20),11-dien-5alpha-yl acetate + oxidized [NADPH--hemoprotein reductase] + H2O + H(+). Its pathway is alkaloid biosynthesis; taxol biosynthesis; 10-deacetyl-2-debenzoylbaccatin III from taxa-4(20),11-dien-5alpha-ol: step 2/3. In terms of biological role, involved in the transformation of a taxadienyl acetate by hydroxylation at C10 to yield taxadien-5-alpha-acetoxy-10-beta-ol. In Taxus cuspidata (Japanese yew), this protein is Taxane 10-beta-hydroxylase (CYP725A1).